Reading from the N-terminus, the 377-residue chain is Endolytic peptidoglycan transglycosylase RlpA (377 aa).

Residues 1 to 19 (MHKQLPVICVAAGIVLLAA) form the signal peptide. Cys20 carries the N-palmitoyl cysteine lipid modification. Cys20 carries S-diacylglycerol cysteine lipidation. A disordered region spans residues 196–277 (LPPRPDLSGG…PVSAPVTAPA (82 aa)). Composition is skewed to low complexity over residues 208–218 (SASSAPAQPQG) and 264–277 (PQTAPVSAPVTAPA). Positions 300 to 376 (AAASGRFVVQ…AQLQSFIASA (77 aa)) constitute an SPOR domain.

Belongs to the RlpA family.

Its subcellular location is the cell membrane. In terms of biological role, lytic transglycosylase with a strong preference for naked glycan strands that lack stem peptides. This chain is Endolytic peptidoglycan transglycosylase RlpA, found in Salmonella typhi.